The primary structure comprises 325 residues: Zinc finger C2HC domain-containing protein 1A (325 aa).

A C2HC/C3H-type 1 zinc finger spans residues 15–44 (ELLPCKICGRTFFPVALKKHGPICQKTATK). 4 residues coordinate Zn(2+): Cys19, Cys22, His34, and Cys38. Positions 43 to 83 (TKKRKTFDSSRQRAEGTDIPTVKPLKPRPEPPKKPSNWRRK) are disordered. Basic and acidic residues predominate over residues 48–58 (TFDSSRQRAEG). The C2HC/C3H-type 2 zinc-finger motif lies at 118 to 147 (DYIQCPYCQRRFNENAADRHINFCKEQAAR). 4 residues coordinate Zn(2+): Cys122, Cys125, His137, and Cys141. Residues 150-260 (NKGKFSTDTK…NPAPGVLTNK (111 aa)) are disordered. Composition is skewed to low complexity over residues 177-188 (SNSPGTASSGSS) and 197-216 (GKTV…SSLG). Ser223 is modified (phosphoserine). A Phosphothreonine modification is found at Thr244. Phosphoserine is present on Ser292.

Belongs to the ZC2HC1 family. Zn(2+) is required as a cofactor.

The sequence is that of Zinc finger C2HC domain-containing protein 1A (ZC2HC1A) from Homo sapiens (Human).